A 111-amino-acid polypeptide reads, in one-letter code: Anti-adapter protein IraM (111 aa).

The protein belongs to the IraM/RssC family.

It is found in the cytoplasm. In terms of biological role, involved in the stabilization of the sigma stress factor RpoS. The protein is Anti-adapter protein IraM of Cronobacter sakazakii (strain ATCC BAA-894) (Enterobacter sakazakii).